Here is a 215-residue protein sequence, read N- to C-terminus: Adenylate kinase (215 aa).

An ATP-binding site is contributed by 10–15 (GAGKGT). Positions 30 to 59 (STGDILRANVREGTELGLAAKAYMDKGELV) are NMP. AMP-binding positions include Thr31, Arg36, 57–59 (ELV), 85–88 (GYPR), and Gln92. The segment at 126-162 (GRLMCKCGASYHIISNPPKKDNVCDICGGEVFQRADD) is LID. Arg127 is a binding site for ATP. Residues Cys130 and Cys132 each contribute to the Zn(2+) site. 135-136 (SY) contacts ATP. Zn(2+) is bound by residues Cys149 and Cys152. AMP contacts are provided by Arg159 and Arg170. Lys198 is an ATP binding site.

Belongs to the adenylate kinase family. Monomer.

It is found in the cytoplasm. It catalyses the reaction AMP + ATP = 2 ADP. It participates in purine metabolism; AMP biosynthesis via salvage pathway; AMP from ADP: step 1/1. Catalyzes the reversible transfer of the terminal phosphate group between ATP and AMP. Plays an important role in cellular energy homeostasis and in adenine nucleotide metabolism. This is Adenylate kinase from Methanosarcina acetivorans (strain ATCC 35395 / DSM 2834 / JCM 12185 / C2A).